The following is a 365-amino-acid chain: Succinyl-diaminopimelate desuccinylase (365 aa).

His64 provides a ligand contact to Zn(2+). The active site involves Asp66. Zn(2+) is bound at residue Asp95. The Proton acceptor role is filled by Glu125. Positions 126, 154, and 339 each coordinate Zn(2+).

The protein belongs to the peptidase M20A family. DapE subfamily. In terms of assembly, homodimer. Zn(2+) is required as a cofactor. It depends on Co(2+) as a cofactor.

It carries out the reaction N-succinyl-(2S,6S)-2,6-diaminopimelate + H2O = (2S,6S)-2,6-diaminopimelate + succinate. Its pathway is amino-acid biosynthesis; L-lysine biosynthesis via DAP pathway; LL-2,6-diaminopimelate from (S)-tetrahydrodipicolinate (succinylase route): step 3/3. Catalyzes the hydrolysis of N-succinyl-L,L-diaminopimelic acid (SDAP), forming succinate and LL-2,6-diaminopimelate (DAP), an intermediate involved in the bacterial biosynthesis of lysine and meso-diaminopimelic acid, an essential component of bacterial cell walls. This Campylobacter curvus (strain 525.92) protein is Succinyl-diaminopimelate desuccinylase.